A 155-amino-acid chain; its full sequence is Small ribosomal subunit protein eS19B (155 aa).

It belongs to the eukaryotic ribosomal protein eS19 family.

This chain is Small ribosomal subunit protein eS19B (RpS19b), found in Drosophila melanogaster (Fruit fly).